Reading from the N-terminus, the 673-residue chain is Clotting factor G alpha subunit (673 aa).

Residues 1 to 19 form the signal peptide; the sequence is MLVLLCCVVLHVGVARICC. A GH16 domain is found at 27–257; the sequence is LVWSDEFTNG…YVRVYQDAST (231 aa). Glutamate 137 serves as the catalytic Nucleophile. Glutamate 142 functions as the Proton donor in the catalytic mechanism. N-linked (GlcNAc...) asparagine glycosylation occurs at asparagine 186. The region spanning 266-404 is the Ricin B-type lectin domain; the sequence is LDGYYFVQNR…NQLSGQWKLI (139 aa). 2 consecutive CBM6 domains span residues 411–533 and 549–671; these read KLIQ…IKIT and KLIQ…IRIT.

This sequence belongs to the glycosyl hydrolase 16 family. As to quaternary structure, clotting factor G is a heterodimer composed of two non-covalently associated subunits, alpha and beta. In terms of processing, in presence of (1-&gt;3)-beta-glucan, proteolytically cleaved into a 55kDa and a 17kDa forms. As to expression, expressed in hemocytes (at protein level).

Its function is as follows. Component of the heterodimer clotting factor G which may play a role in defense mechanisms against fungi. Initiates a (1-&gt;3)-beta-glucan-sensing clotting pathway whereby the alpha subunit binds to glucans containing (1-&gt;3)-beta linkages, which are components of the fungal cell wall, and the beta subunit catalyzes the activation of proclotting enzyme. This Tachypleus tridentatus (Japanese horseshoe crab) protein is Clotting factor G alpha subunit.